Here is a 238-residue protein sequence, read N- to C-terminus: MLVIPAIDLMGGEAVRLEKGDFATKTVYARHPAEKAEEFARAGATLLHVVDLDGAKAGWPVNLDAVRAICEVPGIEVELGGGLRSLPDIEKVLALGVRYVVLGTAAVERLGLVEQACQRFPGQVRAGIDARNGEVKIAGWLEGTGLAAVDVARKVKGAGVGLVEYTDVARDGMFTGVDAAGAARIQAEAGIPVVASGGVASLDDVTACRAAGLAGVIVGKALYERRIDLAAAIRAAAA.

The Proton acceptor role is filled by D8. D129 serves as the catalytic Proton donor.

The protein belongs to the HisA/HisF family.

The protein localises to the cytoplasm. The catalysed reaction is 1-(5-phospho-beta-D-ribosyl)-5-[(5-phospho-beta-D-ribosylamino)methylideneamino]imidazole-4-carboxamide = 5-[(5-phospho-1-deoxy-D-ribulos-1-ylimino)methylamino]-1-(5-phospho-beta-D-ribosyl)imidazole-4-carboxamide. The protein operates within amino-acid biosynthesis; L-histidine biosynthesis; L-histidine from 5-phospho-alpha-D-ribose 1-diphosphate: step 4/9. The protein is 1-(5-phosphoribosyl)-5-[(5-phosphoribosylamino)methylideneamino] imidazole-4-carboxamide isomerase of Anaeromyxobacter sp. (strain Fw109-5).